The primary structure comprises 254 residues: Alcohol dehydrogenase (254 aa).

Residue 10–33 (FVAGLGGIGLDTSREIVKSGPKNL) participates in NAD(+) binding. S138 contributes to the substrate binding site. The active-site Proton acceptor is Y151.

This sequence belongs to the short-chain dehydrogenases/reductases (SDR) family. As to quaternary structure, homodimer.

The catalysed reaction is a primary alcohol + NAD(+) = an aldehyde + NADH + H(+). It catalyses the reaction a secondary alcohol + NAD(+) = a ketone + NADH + H(+). The protein is Alcohol dehydrogenase (Adh) of Drosophila borealis (Fruit fly).